Consider the following 399-residue polypeptide: Ras-related GTP-binding protein C (399 aa).

Positions 1–20 (MSLQYGAEETPLAGSYGAAD) are disordered. Residue Ser-2 is modified to N-acetylserine. Phosphoserine occurs at positions 2 and 15. Residues Arg-71, Ser-72, Gly-73, Lys-74, Ser-75, Ser-76, Thr-90, Glu-94, Thr-96, His-178, Lys-179, Asp-181, Ser-219, and Ile-220 each coordinate GDP. Residue Lys-74 participates in GTP binding. A GTP-binding site is contributed by Thr-90. Thr-96 contributes to the GTP binding site. Position 96 is a phosphothreonine (Thr-96). Residue Asp-181 coordinates GTP.

It belongs to the GTR/RAG GTP-binding protein family. As to quaternary structure, forms a heterodimer with RRAGA, in a sequence-independent manner, and RRAGB. Heterodimerization stabilizes proteins of the heterodimer. The GDP-bound form of RRAGC (in complex with the GTP-bound form of RRAGA or RRAGB), interacts with RPTOR, thereby promoting recruitment of mTORC1 to the lysosomes. Component of the lysosomal folliculin complex (LFC), composed of FLCN, FNIP1 (or FNIP2), RagA/RRAGA or RagB/RRAGB GDP-bound, RagC/RRAGC or RagD/RRAGD GTP-bound, and Ragulator. Interacts with NOL8. Interacts with SH3BP4; the interaction with this negative regulator is most probably direct, preferentially occurs with the inactive GDP-bound form of RRAGB, is negatively regulated by amino acids and prevents interaction with RPTOR. The Rag heterodimer interacts with SLC38A9; the probable amino acid sensor. Interacts with SESN1, SESN2 and SESN3. Interacts with PIP4P1. The Rag heterodimer interacts with the Ragulator complex. The GDP-bound form interacts with TFEB. The GDP-bound form interacts with TFE3.

The protein resides in the cytoplasm. It localises to the nucleus. It is found in the lysosome membrane. The enzyme catalyses GTP + H2O = GDP + phosphate + H(+). Its activity is regulated as follows. The activation of RagC/RRAGC is mediated by a GTPase activating protein (GAP). In high-amino acid conditions, activated by GTPase activating protein FLCN that stimulates RRAGC GTPase activity to turn it into its active GDP-bound form. In response to amino acid depletion, the GATOR1 complex inactivates RagC/RRAGC by securing the GTP-bound inactive form. Guanine nucleotide-binding protein that plays a crucial role in the cellular response to amino acid availability through regulation of the mTORC1 signaling cascade. Forms heterodimeric Rag complexes with RagA/RRAGA or RagB/RRAGB and cycles between an inactive GTP-bound and an active GDP-bound form: RagC/RRAGC is in its active form when GDP-bound RagC/RRAGC forms a complex with GTP-bound RagA/RRAGA (or RagB/RRAGB) and in an inactive form when GTP-bound RagC/RRAGC heterodimerizes with GDP-bound RagA/RRAGA (or RagB/RRAGB). In its GDP-bound active form, promotes the recruitment of mTORC1 to the lysosomes and its subsequent activation by the GTPase RHEB. This is a crucial step in the activation of the MTOR signaling cascade by amino acids. Also plays a central role in the non-canonical mTORC1 complex, which acts independently of RHEB and specifically mediates phosphorylation of MiT/TFE factors TFEB and TFE3: GDP-bound RagC/RRAGC mediates recruitment of MiT/TFE factors TFEB and TFE3. This Homo sapiens (Human) protein is Ras-related GTP-binding protein C.